The sequence spans 441 residues: Ribosomal protein uS12 methylthiotransferase RimO (441 aa).

Positions 8–118 (PKIGFVSLGC…VLEHVHHYSP (111 aa)) constitute an MTTase N-terminal domain. Positions 17, 53, 82, 150, 154, and 157 each coordinate [4Fe-4S] cluster. In terms of domain architecture, Radical SAM core spans 136–373 (LTPRHYAYLK…MQLQQQISAE (238 aa)). The region spanning 376–441 (QEKVGREILV…DEYDLWGTRV (66 aa)) is the TRAM domain.

It belongs to the methylthiotransferase family. RimO subfamily. [4Fe-4S] cluster serves as cofactor.

The protein resides in the cytoplasm. The catalysed reaction is L-aspartate(89)-[ribosomal protein uS12]-hydrogen + (sulfur carrier)-SH + AH2 + 2 S-adenosyl-L-methionine = 3-methylsulfanyl-L-aspartate(89)-[ribosomal protein uS12]-hydrogen + (sulfur carrier)-H + 5'-deoxyadenosine + L-methionine + A + S-adenosyl-L-homocysteine + 2 H(+). Catalyzes the methylthiolation of an aspartic acid residue of ribosomal protein uS12. This chain is Ribosomal protein uS12 methylthiotransferase RimO, found in Klebsiella pneumoniae (strain 342).